Consider the following 471-residue polypeptide: Glutamine synthetase (471 aa).

Residues 14–99 (QKIQMIDLKF…ICSIKEPRTG (86 aa)) enclose the GS beta-grasp domain. Positions 106-471 (PRVIAQKAID…PYEFYLYYDC (366 aa)) constitute a GS catalytic domain. Residues glutamate 131 and glutamate 133 each contribute to the Mg(2+) site. Position 208 (glutamate 208) interacts with ATP. Positions 213 and 221 each coordinate Mg(2+). L-glutamate contacts are provided by residues 265–266 (NG) and glycine 266. Histidine 270 serves as a coordination point for Mg(2+). Residues 272–274 (HQS) and serine 274 contribute to the ATP site. The L-glutamate site is built by arginine 322, glutamate 328, and arginine 340. ATP is bound by residues arginine 340, arginine 345, and lysine 354. Residue glutamate 359 participates in Mg(2+) binding. Arginine 361 contacts L-glutamate. Residue tyrosine 399 is modified to O-AMP-tyrosine.

It belongs to the glutamine synthetase family. Oligomer of 12 subunits arranged in the form of two hexagons. Mg(2+) is required as a cofactor.

The protein localises to the cytoplasm. It catalyses the reaction L-glutamate + NH4(+) + ATP = L-glutamine + ADP + phosphate + H(+). Its activity is regulated as follows. The activity of this enzyme could be controlled by adenylation under conditions of abundant glutamine. Involved in nitrogen metabolism via ammonium assimilation. Catalyzes the ATP-dependent biosynthesis of glutamine from glutamate and ammonia. In Microchaete diplosiphon (Fremyella diplosiphon), this protein is Glutamine synthetase.